Here is a 509-residue protein sequence, read N- to C-terminus: Bifunctional purine biosynthesis protein PurH (509 aa).

The region spanning 1–144 (MKRALISVSD…KNYAAVTVVV (144 aa)) is the MGS-like domain.

This sequence belongs to the PurH family.

It catalyses the reaction (6R)-10-formyltetrahydrofolate + 5-amino-1-(5-phospho-beta-D-ribosyl)imidazole-4-carboxamide = 5-formamido-1-(5-phospho-D-ribosyl)imidazole-4-carboxamide + (6S)-5,6,7,8-tetrahydrofolate. It carries out the reaction IMP + H2O = 5-formamido-1-(5-phospho-D-ribosyl)imidazole-4-carboxamide. It participates in purine metabolism; IMP biosynthesis via de novo pathway; 5-formamido-1-(5-phospho-D-ribosyl)imidazole-4-carboxamide from 5-amino-1-(5-phospho-D-ribosyl)imidazole-4-carboxamide (10-formyl THF route): step 1/1. Its pathway is purine metabolism; IMP biosynthesis via de novo pathway; IMP from 5-formamido-1-(5-phospho-D-ribosyl)imidazole-4-carboxamide: step 1/1. The sequence is that of Bifunctional purine biosynthesis protein PurH from Listeria monocytogenes serotype 4a (strain HCC23).